We begin with the raw amino-acid sequence, 341 residues long: Heat-inducible transcription repressor HrcA (341 aa).

It belongs to the HrcA family.

Negative regulator of class I heat shock genes (grpE-dnaK-dnaJ and groELS operons). Prevents heat-shock induction of these operons. The protein is Heat-inducible transcription repressor HrcA of Leptothrix cholodnii (strain ATCC 51168 / LMG 8142 / SP-6) (Leptothrix discophora (strain SP-6)).